Reading from the N-terminus, the 200-residue chain is Imidazoleglycerol-phosphate dehydratase (200 aa).

It belongs to the imidazoleglycerol-phosphate dehydratase family.

It localises to the cytoplasm. It catalyses the reaction D-erythro-1-(imidazol-4-yl)glycerol 3-phosphate = 3-(imidazol-4-yl)-2-oxopropyl phosphate + H2O. The protein operates within amino-acid biosynthesis; L-histidine biosynthesis; L-histidine from 5-phospho-alpha-D-ribose 1-diphosphate: step 6/9. The chain is Imidazoleglycerol-phosphate dehydratase from Chlorobium phaeobacteroides (strain BS1).